We begin with the raw amino-acid sequence, 1701 residues long: Merozoite surface protein 1 (1701 aa).

An N-terminal signal peptide occupies residues 1–19 (MKIIFFLCSFLFFIINTQC). A compositionally biased stretch (gly residues) spans 89–100 (GSGGSVASGGSG). Residues 89–118 (GSGGSVASGGSGNSRRTNPSDNSSDSNTKT) form a disordered region. Over residues 101–116 (NSRRTNPSDNSSDSNT) the composition is skewed to low complexity. N-linked (GlcNAc...) asparagine glycosylation is found at Asn-110 and Asn-239. The tract at residues 322-344 (DAENPTTGSKPNPLPENKKKEVE) is disordered. Residues Asn-470, Asn-536, and Asn-607 are each glycosylated (N-linked (GlcNAc...) asparagine). The interval 704–739 (SETTEDGGHSTHTLSQSGETEVTEETEVTEETVGHT) is disordered. Over residues 724-733 (EVTEETEVTE) the composition is skewed to acidic residues. N-linked (GlcNAc...) asparagine glycans are attached at residues Asn-802, Asn-899, Asn-919, Asn-965, Asn-991, Asn-1089, and Asn-1196. Over residues 889 to 927 (TGTSSTSSPGNTTVNTAQSATHSNSQNQQSNASSTNTQN) the composition is skewed to low complexity. A disordered region spans residues 889–936 (TGTSSTSSPGNTTVNTAQSATHSNSQNQQSNASSTNTQNGVAVSSGPA). Disordered regions lie at residues 1230–1259 (TPPQPDVTPSPLSVRVSGSSGSTKEETQIP) and 1451–1472 (KEKFPSSPPTTPPSPAKTDEQK). Residues 1245 to 1259 (VSGSSGSTKEETQIP) are compositionally biased toward polar residues. A compositionally biased stretch (pro residues) spans 1456–1465 (SSPPTTPPSP). N-linked (GlcNAc...) asparagine glycosylation occurs at Asn-1588. 2 EGF-like domains span residues 1592-1632 (HQCV…VENP) and 1633-1680 (NPTC…IFCS). 6 disulfide bridges follow: Cys-1594–Cys-1605, Cys-1599–Cys-1615, Cys-1617–Cys-1628, Cys-1636–Cys-1649, Cys-1643–Cys-1663, and Cys-1665–Cys-1679. Ser-1680 is lipidated: GPI-anchor amidated serine. A propeptide spans 1681 to 1701 (SSNFLGISFLLILMLILYSFI) (removed in mature form).

In terms of assembly, forms a complex composed of subunits p83, p30, p38, and p42 which remain non-covalently associated; the complex is formed at the merozoite surface prior to egress from host erythrocytes. Forms a complex composed of processed MSP1 subunits, MSP6 subunit p36 and MSP7; the complex is formed at the merozoite surface prior to egress from host erythrocytes. Within the complex, interacts (via subunit p38) with MSP6 subunit p36 and (via subunits p83, p30 and p38) with MSP7 (via subunit p22). Forms a complex composed of MSP1, MSP6, DBLMSP1 and DBLMSP2. Within the complex, interacts (via subunit p38) with DBLMSP1 and DBLMSP2. Forms a complex composed of MSP1, and rhoptry proteins RhopH3, RAP1 and CLAG9/RhopH3. Within the complex, interacts (via subunits p42 and p19) with RhopH3 (via C-terminus). Forms a complex composed of MSP1, MSP6, MSP7, MSP9 and MSP3; within the complex, MSP6 and MSP9 mediate the binding to the host erythrocyte. Interacts (via subunits p19 and p42) with MSP9; the interaction is direct; MSP1 subunits p19 or p42, and MSP9 form a co-ligand complex that interacts with host SLC4A1/Band 3 protein. May interact with PFD6. Interacts with host spectrin. Interacts with host glycophorin GYPA in a sialic acid-independent manner. As to quaternary structure, interacts with host proinflammatory cytokine S100P; the interaction blocks S100P inflammatory and chemotactic activities. In terms of assembly, interacts with host SLC4A1/Band 3 (via 5ABC region) on the host erythrocyte surface in a sialic acid-independent manner. The p190 precursor is cleaved by SUB1 prior to merozoite egress into 4 subunits p83, p30, p38, and p42 which remain non-covalently associated. SUB1-mediated proteolytic cleavage occurs in an orderly manner; the first cleavage occurs at the p30/p38 site, followed by cleavage at the p83/p30 site, the last cleavage occurs at the p38/p42 site. The order of cleavage is essential for parasite viability. SUB1-mediated processing is essential for merozoite egress. In a second processing step during erythrocyte invasion, p42 is cleaved by SUB2 into p33 and p19; the latter remains attached to the merozoite surface via its GPI-anchor and is endocytosed during the subsequent ring stage.

The protein localises to the cell membrane. The protein resides in the secreted. Its subcellular location is the vacuole membrane. Its function is as follows. During the asexual blood stage, involved in merozoite egress from host erythrocytes possibly via its interaction with the host cytoskeleton protein spectrin resulting in the destabilization of the host cytoskeleton and thus leading to erythrocyte cell membrane rupture. Involved in the binding to host erythrocytes and is required for host erythrocyte invasion. In terms of biological role, by binding to host proinflammatory cytokine S100P may interfere with host immune responses. Functionally, involved in merozoite invasion of host erythrocytes. May play a role in the biogenesis and/or function of the food vacuole during the intraerythrocytic development. This Plasmodium falciparum (isolate mad20 / Papua New Guinea) protein is Merozoite surface protein 1.